We begin with the raw amino-acid sequence, 503 residues long: SWI/SNF and RSC complexes subunit ssr2 (503 aa).

Positions 18–115 (IIVPSYAGWF…YQIDPETRPA (98 aa)) constitute an SWIRM domain. Phosphoserine is present on serine 175. A ZZ-type; degenerate zinc finger spans residues 188-242 (RVDKVCFTCGVNCSQTWYHNLKNKKYDICPNCYKQGRFSSSFNSSDFLCMDAIDF). Positions 193, 196, 216, and 219 each coordinate Zn(2+). In terms of domain architecture, SANT spans 245–296 (DEEKPWSNQETLLLLEAIETYGDDWNQIALHVGSRTKEQCLIHFLQIPIEDP). Position 306 is a phosphoserine (serine 306).

Belongs to the SMARCC family. In terms of assembly, component of the RSC complex composed of at least arp9, arp42, rsc1, rsc4, rsc7, rsc9, rsc58, sfh1, snf21, ssr1, ssr2, ssr3 and ssr4. The complex interacts with histone and histone variant components of centromeric chromatin. Component of the SWI/SNF global transcription activator complex composed of at least arp9, arp42, snf5, snf22, snf30, sbf59, sol1, ssr1, ssr2, ssr3, ssr4 and tfg3.

Its subcellular location is the cytoplasm. It is found in the nucleus. Component of the chromatin structure remodeling complex (RSC), which is involved in transcription regulation and nucleosome positioning. Controls particularly membrane and organelle development genes. Part of the SWI/SNF complex, an ATP-dependent chromatin remodeling complex, required for the positive and negative regulation of gene expression of a large number of genes. It changes chromatin structure by altering DNA-histone contacts within a nucleosome, leading eventually to a change in nucleosome position, thus facilitating or repressing binding of gene-specific transcription factors. In Schizosaccharomyces pombe (strain 972 / ATCC 24843) (Fission yeast), this protein is SWI/SNF and RSC complexes subunit ssr2 (ssr2).